Here is a 136-residue protein sequence, read N- to C-terminus: Large ribosomal subunit protein uL16c (136 aa).

The tract at residues 1–20 is disordered; it reads MLSPKRTRFRKQHRGRMKGK.

This sequence belongs to the universal ribosomal protein uL16 family. Part of the 50S ribosomal subunit.

Its subcellular location is the plastid. It localises to the chloroplast. The polypeptide is Large ribosomal subunit protein uL16c (Agrostis stolonifera (Creeping bentgrass)).